The primary structure comprises 318 residues: Ornithine carbamoyltransferase (318 aa).

Carbamoyl phosphate is bound by residues 63–66 (STRT), Gln90, Arg114, and 141–144 (HPCQ). L-ornithine contacts are provided by residues Asn172, Asp235, and 239-240 (SM). Carbamoyl phosphate is bound by residues 275–276 (CL) and Arg303.

Belongs to the aspartate/ornithine carbamoyltransferase superfamily. OTCase family.

The protein localises to the cytoplasm. The enzyme catalyses carbamoyl phosphate + L-ornithine = L-citrulline + phosphate + H(+). Its pathway is amino-acid biosynthesis; L-arginine biosynthesis; L-arginine from L-ornithine and carbamoyl phosphate: step 1/3. Its function is as follows. Reversibly catalyzes the transfer of the carbamoyl group from carbamoyl phosphate (CP) to the N(epsilon) atom of ornithine (ORN) to produce L-citrulline. This is Ornithine carbamoyltransferase from Parasynechococcus marenigrum (strain WH8102).